A 288-amino-acid chain; its full sequence is 4-diphosphocytidyl-2-C-methyl-D-erythritol kinase (288 aa).

The active site involves K11. An ATP-binding site is contributed by 93–103 (PFGAGLGGGSS). D135 is an active-site residue.

Belongs to the GHMP kinase family. IspE subfamily.

The enzyme catalyses 4-CDP-2-C-methyl-D-erythritol + ATP = 4-CDP-2-C-methyl-D-erythritol 2-phosphate + ADP + H(+). It participates in isoprenoid biosynthesis; isopentenyl diphosphate biosynthesis via DXP pathway; isopentenyl diphosphate from 1-deoxy-D-xylulose 5-phosphate: step 3/6. Functionally, catalyzes the phosphorylation of the position 2 hydroxy group of 4-diphosphocytidyl-2C-methyl-D-erythritol. In Chlorobium limicola (strain DSM 245 / NBRC 103803 / 6330), this protein is 4-diphosphocytidyl-2-C-methyl-D-erythritol kinase.